The following is a 198-amino-acid chain: MICOS complex subunit MIC26 (198 aa).

A signal peptide spans Met1 to Ser25. Residues Pro108–Ala128 traverse the membrane as a helical segment. Ser162 carries O-linked (Xyl...) (chondroitin sulfate) serine glycosylation.

This sequence belongs to the apolipoprotein O/MICOS complex subunit Mic27 family. Component of the mitochondrial contact site and cristae organizing system (MICOS) complex, composed of at least MICOS10/MIC10, CHCHD3/MIC19, CHCHD6/MIC25, APOOL/MIC27, IMMT/MIC60, APOO/MIC23/MIC26 and MICOS13/MIC13. This complex was also known under the names MINOS or MitOS complex. The MICOS complex associates with mitochondrial outer membrane proteins SAMM50, MTX1 and MTX2 (together described as components of the mitochondrial outer membrane sorting assembly machinery (SAM) complex) and DNAJC11, mitochondrial inner membrane protein TMEM11 and with HSPA9. The MICOS and SAM complexes together with DNAJC11 are part of a large protein complex spanning both membranes termed the mitochondrial intermembrane space bridging (MIB) complex. Interacts with IMMT/MIC60. Interacts with MICOS10/MIC10 and APOOL/MIC27. In terms of processing, O-glycosylation; glycosaminoglycan of chondroitin-sulfate type.

The protein resides in the mitochondrion inner membrane. Its subcellular location is the secreted. It localises to the mitochondrion. The protein localises to the endoplasmic reticulum membrane. It is found in the golgi apparatus membrane. Component of the MICOS complex, a large protein complex of the mitochondrial inner membrane that plays crucial roles in the maintenance of crista junctions, inner membrane architecture, and formation of contact sites to the outer membrane. Plays a crucial role in crista junction formation and mitochondrial function. Can induce cardiac lipotoxicity by enhancing mitochondrial respiration and fatty acid metabolism in cardiac myoblasts. Promotes cholesterol efflux from macrophage cells. Detected in HDL, LDL and VLDL. Secreted by a microsomal triglyceride transfer protein (MTTP)-dependent mechanism, probably as a VLDL-associated protein that is subsequently transferred to HDL. This is MICOS complex subunit MIC26 (APOO) from Bos taurus (Bovine).